The chain runs to 236 residues: tRNA (guanine-N(7)-)-methyltransferase (236 aa).

The segment covering 1-17 (MSERKSDPDRDDSERAF) has biased composition (basic and acidic residues). The disordered stretch occupies residues 1–23 (MSERKSDPDRDDSERAFFGRRKG). S-adenosyl-L-methionine contacts are provided by Glu-67, Glu-92, Asp-119, and Asp-141. Asp-141 is a catalytic residue. Substrate is bound by residues Lys-145 and Asp-177.

The protein belongs to the class I-like SAM-binding methyltransferase superfamily. TrmB family.

The enzyme catalyses guanosine(46) in tRNA + S-adenosyl-L-methionine = N(7)-methylguanosine(46) in tRNA + S-adenosyl-L-homocysteine. Its pathway is tRNA modification; N(7)-methylguanine-tRNA biosynthesis. In terms of biological role, catalyzes the formation of N(7)-methylguanine at position 46 (m7G46) in tRNA. The sequence is that of tRNA (guanine-N(7)-)-methyltransferase from Bradyrhizobium diazoefficiens (strain JCM 10833 / BCRC 13528 / IAM 13628 / NBRC 14792 / USDA 110).